Consider the following 368-residue polypeptide: Molybdenum import ATP-binding protein ModC (368 aa).

The 230-residue stretch at 1–230 (MTIKIQFKQT…HAMRPWQSFS (230 aa)) folds into the ABC transporter domain. 32-39 (GRSGAGKT) is a binding site for ATP. Positions 291 to 362 (ATSIRNVLPA…VKGVSVTQRD (72 aa)) constitute a Mop domain.

This sequence belongs to the ABC transporter superfamily. Molybdate importer (TC 3.A.1.8) family. In terms of assembly, the complex is composed of two ATP-binding proteins (ModC), two transmembrane proteins (ModB) and a solute-binding protein (ModA).

The protein localises to the cell inner membrane. The catalysed reaction is molybdate(out) + ATP + H2O = molybdate(in) + ADP + phosphate + H(+). Part of the ABC transporter complex ModABC involved in molybdenum import. Responsible for energy coupling to the transport system. The sequence is that of Molybdenum import ATP-binding protein ModC from Vibrio parahaemolyticus serotype O3:K6 (strain RIMD 2210633).